We begin with the raw amino-acid sequence, 437 residues long: Proline--tRNA ligase (437 aa).

Belongs to the class-II aminoacyl-tRNA synthetase family. ProS type 2 subfamily. As to quaternary structure, homodimer.

The protein resides in the cytoplasm. It carries out the reaction tRNA(Pro) + L-proline + ATP = L-prolyl-tRNA(Pro) + AMP + diphosphate. In terms of biological role, catalyzes the attachment of proline to tRNA(Pro) in a two-step reaction: proline is first activated by ATP to form Pro-AMP and then transferred to the acceptor end of tRNA(Pro). The polypeptide is Proline--tRNA ligase (Acidiphilium cryptum (strain JF-5)).